We begin with the raw amino-acid sequence, 285 residues long: Nucleotide-binding protein Glov_2163 (285 aa).

G8–S15 provides a ligand contact to ATP. D59–G62 is a binding site for GTP.

This sequence belongs to the RapZ-like family.

Displays ATPase and GTPase activities. In Trichlorobacter lovleyi (strain ATCC BAA-1151 / DSM 17278 / SZ) (Geobacter lovleyi), this protein is Nucleotide-binding protein Glov_2163.